A 128-amino-acid chain; its full sequence is Small ribosomal subunit protein eS8 (128 aa).

Residues 1-37 (MGYFQGNDFRKITGGKKGKHRDKRKFELGSPPTETKL) form a disordered region. Positions 13–23 (TGGKKGKHRDK) are enriched in basic residues.

This sequence belongs to the eukaryotic ribosomal protein eS8 family. As to quaternary structure, part of the 30S ribosomal subunit.

The protein is Small ribosomal subunit protein eS8 of Sulfurisphaera tokodaii (strain DSM 16993 / JCM 10545 / NBRC 100140 / 7) (Sulfolobus tokodaii).